We begin with the raw amino-acid sequence, 327 residues long: uncharacterized protein (327 aa).

The chain crosses the membrane as a helical span at residues 13–33 (IICIISIIVLLLIIISLYPHK).

It localises to the membrane. This is an uncharacterized protein from Caenorhabditis elegans.